Consider the following 280-residue polypeptide: Phosphatidylserine decarboxylase proenzyme (280 aa).

Active-site charge relay system; for autoendoproteolytic cleavage activity residues include D88, H144, and S247. S247 (schiff-base intermediate with substrate; via pyruvic acid; for decarboxylase activity) is an active-site residue. At S247 the chain carries Pyruvic acid (Ser); by autocatalysis.

Belongs to the phosphatidylserine decarboxylase family. PSD-B subfamily. Prokaryotic type I sub-subfamily. As to quaternary structure, heterodimer of a large membrane-associated beta subunit and a small pyruvoyl-containing alpha subunit. Requires pyruvate as cofactor. In terms of processing, is synthesized initially as an inactive proenzyme. Formation of the active enzyme involves a self-maturation process in which the active site pyruvoyl group is generated from an internal serine residue via an autocatalytic post-translational modification. Two non-identical subunits are generated from the proenzyme in this reaction, and the pyruvate is formed at the N-terminus of the alpha chain, which is derived from the carboxyl end of the proenzyme. The autoendoproteolytic cleavage occurs by a canonical serine protease mechanism, in which the side chain hydroxyl group of the serine supplies its oxygen atom to form the C-terminus of the beta chain, while the remainder of the serine residue undergoes an oxidative deamination to produce ammonia and the pyruvoyl prosthetic group on the alpha chain. During this reaction, the Ser that is part of the protease active site of the proenzyme becomes the pyruvoyl prosthetic group, which constitutes an essential element of the active site of the mature decarboxylase.

It localises to the cell membrane. It carries out the reaction a 1,2-diacyl-sn-glycero-3-phospho-L-serine + H(+) = a 1,2-diacyl-sn-glycero-3-phosphoethanolamine + CO2. It functions in the pathway phospholipid metabolism; phosphatidylethanolamine biosynthesis; phosphatidylethanolamine from CDP-diacylglycerol: step 2/2. Its function is as follows. Catalyzes the formation of phosphatidylethanolamine (PtdEtn) from phosphatidylserine (PtdSer). This chain is Phosphatidylserine decarboxylase proenzyme, found in Xanthomonas euvesicatoria pv. vesicatoria (strain 85-10) (Xanthomonas campestris pv. vesicatoria).